A 76-amino-acid polypeptide reads, in one-letter code: ATP synthase subunit 9, mitochondrial (76 aa).

2 helical membrane-spanning segments follow: residues 11-31 and 53-73; these read IGAGLATIGLTGVGAGVGIVF and ILGFALTEAVALFALMMAFLI.

It belongs to the ATPase C chain family. F-type ATPases have 2 components, CF(1) - the catalytic core - and CF(0) - the membrane proton channel. CF(1) has five subunits: alpha(3), beta(3), gamma(1), delta(1), epsilon(1). CF(0) has three main subunits: a, b and c.

The protein localises to the mitochondrion membrane. Functionally, this protein is one of the chains of the nonenzymatic membrane component (F0) of mitochondrial ATPase. The protein is ATP synthase subunit 9, mitochondrial (ATP9) of Chondrus crispus (Carrageen Irish moss).